A 373-amino-acid chain; its full sequence is Unsaturated rhamnogalacturonyl hydrolase YteR (373 aa).

Residues 40 to 41 (HY), aspartate 88, and 132 to 136 (HKDGY) contribute to the substrate site. The active-site Proton donor is the aspartate 143. Substrate is bound by residues 213–217 (RSIGW) and 333–334 (TS).

The protein belongs to the glycosyl hydrolase 105 family. As to quaternary structure, monomer.

The protein resides in the cytoplasm. The catalysed reaction is 2-O-(4-deoxy-beta-L-threo-hex-4-enopyranuronosyl)-alpha-L-rhamnose + H2O = 5-dehydro-4-deoxy-D-glucuronate + L-rhamnopyranose. In terms of biological role, catalyzes the hydrolysis of unsaturated rhamnogalacturonan disaccharide to yield unsaturated D-galacturonic acid and L-rhamnose. It cannot act on unsaturated glucuronyl hydrolase (UGL) substrates containing unsaturated D-glucuronic acid at the non-reducing terminus, although the active pockets of YesR and UGL are very similar. This is Unsaturated rhamnogalacturonyl hydrolase YteR (yteR) from Bacillus subtilis (strain 168).